The following is a 389-amino-acid chain: Probable acyl-CoA dehydrogenase fadE25 (389 aa).

This sequence belongs to the acyl-CoA dehydrogenase family. It depends on FAD as a cofactor.

The catalysed reaction is a 2,3-saturated acyl-CoA + A = a 2,3-dehydroacyl-CoA + AH2. In Mycobacterium bovis (strain ATCC BAA-935 / AF2122/97), this protein is Probable acyl-CoA dehydrogenase fadE25 (fadE25).